Consider the following 121-residue polypeptide: Prefoldin subunit beta (121 aa).

The protein belongs to the prefoldin subunit beta family. As to quaternary structure, heterohexamer of two alpha and four beta subunits.

Its subcellular location is the cytoplasm. Its function is as follows. Molecular chaperone capable of stabilizing a range of proteins. Seems to fulfill an ATP-independent, HSP70-like function in archaeal de novo protein folding. The chain is Prefoldin subunit beta from Methanoculleus marisnigri (strain ATCC 35101 / DSM 1498 / JR1).